Here is a 652-residue protein sequence, read N- to C-terminus: Acetyl-coenzyme A synthetase (652 aa).

CoA contacts are provided by residues 191-194 (RAGR), T311, and N335. ATP contacts are provided by residues 387–389 (GEP), 411–416 (DTWWQT), D500, and R515. S523 contacts CoA. R526 lines the ATP pocket. V537, H539, and I542 together coordinate Mg(2+). Residue R584 participates in CoA binding. K609 is subject to N6-acetyllysine.

The protein belongs to the ATP-dependent AMP-binding enzyme family. Requires Mg(2+) as cofactor. Post-translationally, acetylated. Deacetylation by the SIR2-homolog deacetylase activates the enzyme.

It carries out the reaction acetate + ATP + CoA = acetyl-CoA + AMP + diphosphate. Functionally, catalyzes the conversion of acetate into acetyl-CoA (AcCoA), an essential intermediate at the junction of anabolic and catabolic pathways. Acs undergoes a two-step reaction. In the first half reaction, Acs combines acetate with ATP to form acetyl-adenylate (AcAMP) intermediate. In the second half reaction, it can then transfer the acetyl group from AcAMP to the sulfhydryl group of CoA, forming the product AcCoA. Enables the cell to use acetate during aerobic growth to generate energy via the TCA cycle, and biosynthetic compounds via the glyoxylate shunt. Acetylates CheY, the response regulator involved in flagellar movement and chemotaxis. The chain is Acetyl-coenzyme A synthetase from Yersinia pestis.